The sequence spans 71 residues: DNA-directed RNA polymerase subunit omega (71 aa).

Belongs to the RNA polymerase subunit omega family. As to quaternary structure, the RNAP catalytic core consists of 2 alpha, 1 beta, 1 beta' and 1 omega subunit. When a sigma factor is associated with the core the holoenzyme is formed, which can initiate transcription.

The enzyme catalyses RNA(n) + a ribonucleoside 5'-triphosphate = RNA(n+1) + diphosphate. Its function is as follows. Promotes RNA polymerase assembly. Latches the N- and C-terminal regions of the beta' subunit thereby facilitating its interaction with the beta and alpha subunits. This chain is DNA-directed RNA polymerase subunit omega, found in Aromatoleum aromaticum (strain DSM 19018 / LMG 30748 / EbN1) (Azoarcus sp. (strain EbN1)).